Here is a 432-residue protein sequence, read N- to C-terminus: DEAD-box ATP-dependent RNA helicase 56 (432 aa).

A coiled-coil region spans residues 1-28; that stretch reads MAEAEVKDNEVYEEDLVDYEEEVENGTD. Positions 51–79 match the Q motif motif; sequence SGFRDFLLKPELLRAIQDCGFEHPSEVQH. In terms of domain architecture, Helicase ATP-binding spans 82–255; that stretch reads IPQAILGMDV…KKFMQDPMEI (174 aa). 95 to 102 provides a ligand contact to ATP; sequence AKSGMGKT. A DEAD box motif is present at residues 202-205; the sequence is DECD. The Helicase C-terminal domain maps to 283–428; that stretch reads KLNDLLDALD…ELPEQIDTST (146 aa).

The protein belongs to the DEAD box helicase family. DECD subfamily. In terms of assembly, homodimer and heterodimer with AIP2. Interacts with API5.

The protein resides in the nucleus. The enzyme catalyses ATP + H2O = ADP + phosphate + H(+). In terms of biological role, ATP-binding RNA helicase involved in pre-mRNA splicing. Required for the export of mRNA out of the nucleus. Required for tapetal programmed cell death (PCD) and degeneration during anther development. Forms dimer with AIP2 and binds the promoter region of the cysteine protease CP1. Can complement the yeast RNA helicase SUB2. Plants silencing AIP1 and AIP2 are male sterile. This chain is DEAD-box ATP-dependent RNA helicase 56, found in Oryza sativa subsp. japonica (Rice).